We begin with the raw amino-acid sequence, 273 residues long: Putative pyruvate, phosphate dikinase regulatory protein 2 (273 aa).

Residue 151–158 (GVSRTSKT) coordinates ADP.

This sequence belongs to the pyruvate, phosphate/water dikinase regulatory protein family. PDRP subfamily.

The catalysed reaction is N(tele)-phospho-L-histidyl/L-threonyl-[pyruvate, phosphate dikinase] + ADP = N(tele)-phospho-L-histidyl/O-phospho-L-threonyl-[pyruvate, phosphate dikinase] + AMP + H(+). It carries out the reaction N(tele)-phospho-L-histidyl/O-phospho-L-threonyl-[pyruvate, phosphate dikinase] + phosphate + H(+) = N(tele)-phospho-L-histidyl/L-threonyl-[pyruvate, phosphate dikinase] + diphosphate. Bifunctional serine/threonine kinase and phosphorylase involved in the regulation of the pyruvate, phosphate dikinase (PPDK) by catalyzing its phosphorylation/dephosphorylation. The polypeptide is Putative pyruvate, phosphate dikinase regulatory protein 2 (Syntrophomonas wolfei subsp. wolfei (strain DSM 2245B / Goettingen)).